Consider the following 363-residue polypeptide: Glutamate 5-kinase (363 aa).

Lysine 6 provides a ligand contact to ATP. Residues serine 46, aspartate 133, and asparagine 145 each contribute to the substrate site. ATP-binding positions include 165–166 and 207–213; these read TD and TGGMHTK. The 79-residue stretch at 271 to 349 folds into the PUA domain; the sequence is HGRLLLDGGA…REIEALLGYT (79 aa).

Belongs to the glutamate 5-kinase family.

The protein resides in the cytoplasm. The catalysed reaction is L-glutamate + ATP = L-glutamyl 5-phosphate + ADP. It participates in amino-acid biosynthesis; L-proline biosynthesis; L-glutamate 5-semialdehyde from L-glutamate: step 1/2. In terms of biological role, catalyzes the transfer of a phosphate group to glutamate to form L-glutamate 5-phosphate. The chain is Glutamate 5-kinase from Deinococcus radiodurans (strain ATCC 13939 / DSM 20539 / JCM 16871 / CCUG 27074 / LMG 4051 / NBRC 15346 / NCIMB 9279 / VKM B-1422 / R1).